The sequence spans 487 residues: N-succinylglutamate 5-semialdehyde dehydrogenase (487 aa).

221–226 is an NAD(+) binding site; it reads GSSDTG. Active-site residues include Glu244 and Cys278.

It belongs to the aldehyde dehydrogenase family. AstD subfamily.

The catalysed reaction is N-succinyl-L-glutamate 5-semialdehyde + NAD(+) + H2O = N-succinyl-L-glutamate + NADH + 2 H(+). It participates in amino-acid degradation; L-arginine degradation via AST pathway; L-glutamate and succinate from L-arginine: step 4/5. Functionally, catalyzes the NAD-dependent reduction of succinylglutamate semialdehyde into succinylglutamate. This is N-succinylglutamate 5-semialdehyde dehydrogenase from Burkholderia multivorans (strain ATCC 17616 / 249).